We begin with the raw amino-acid sequence, 51 residues long: ATP synthase subunit epsilon-like protein, mitochondrial (51 aa).

K21 bears the N6-acetyllysine mark.

Belongs to the eukaryotic ATPase epsilon family. In terms of assembly, F-type ATPases have 2 components, CF(1) - the catalytic core - and CF(0) - the membrane proton channel. CF(1) has five subunits: alpha(3), beta(3), gamma(1), delta(1), epsilon(1). CF(0) seems to have nine subunits: a, b, c, d, e, f, g, F6 and 8 (or A6L).

It is found in the mitochondrion inner membrane. Functionally, mitochondrial membrane ATP synthase (F(1)F(0) ATP synthase or Complex V) produces ATP from ADP in the presence of a proton gradient across the membrane which is generated by electron transport complexes of the respiratory chain. F-type ATPases consist of two structural domains, F(1) - containing the extramembraneous catalytic core, and F(0) - containing the membrane proton channel, linked together by a central stalk and a peripheral stalk. During catalysis, ATP synthesis in the catalytic domain of F(1) is coupled via a rotary mechanism of the central stalk subunits to proton translocation. Part of the complex F(1) domain and of the central stalk which is part of the complex rotary element. Rotation of the central stalk against the surrounding alpha(3)beta(3) subunits leads to hydrolysis of ATP in three separate catalytic sites on the beta subunits. The protein is ATP synthase subunit epsilon-like protein, mitochondrial of Homo sapiens (Human).